Here is an 89-residue protein sequence, read N- to C-terminus: Glutamyl-tRNA(Gln) amidotransferase subunit C (89 aa).

Belongs to the GatC family. Heterotrimer of A, B and C subunits.

The catalysed reaction is L-glutamyl-tRNA(Gln) + L-glutamine + ATP + H2O = L-glutaminyl-tRNA(Gln) + L-glutamate + ADP + phosphate + H(+). The enzyme catalyses L-aspartyl-tRNA(Asn) + L-glutamine + ATP + H2O = L-asparaginyl-tRNA(Asn) + L-glutamate + ADP + phosphate + 2 H(+). Its function is as follows. Allows the formation of correctly charged Asn-tRNA(Asn) or Gln-tRNA(Gln) through the transamidation of misacylated Asp-tRNA(Asn) or Glu-tRNA(Gln) in organisms which lack either or both of asparaginyl-tRNA or glutaminyl-tRNA synthetases. The reaction takes place in the presence of glutamine and ATP through an activated phospho-Asp-tRNA(Asn) or phospho-Glu-tRNA(Gln). This Thermus thermophilus (strain ATCC 27634 / DSM 579 / HB8) protein is Glutamyl-tRNA(Gln) amidotransferase subunit C.